The chain runs to 467 residues: MVSIWTIALFLLGAAKAKEVCYEQIGCFSDAEPWAGTAIRPLKVLPWSPERIGTRFLLYTNKNPNNFQTLLPSDPSTIEASNFQTDKKTRFIIHGFIDKGEENWLLDMCKNMFKVEEVNCICVDWKKGSQTSYTQAANNVRVVGAQVAQMLSMLSANYSYSPSQVQLIGHSLGAHVAGEAGSRTPGLGRITGLDPVEASFQGTPEEVRLDPTDADFVDVIHTDAAPLIPFLGFGTSQQMGHLDFFPNGGEEMPGCKKNALSQIVDLDGIWEGTRDFVACNHLRSYKYYSESILNPDGFASYPCASYRAFESNKCFPCPDQGCPQMGHYADKFAVKTSDETQKYFLNTGDSSNFARWRYGVSITLSGKRATGQAKVALFGSKGNTHQFNIFKGILKPGSTHSNEFDAKLDVGTIEKVKFLWNNNVVNPTFPKVGAAKITVQKGEEKTVHSFCSESTVREDVLLTLTPC.

The N-terminal stretch at 1–17 is a signal peptide; it reads MVSIWTIALFLLGAAKA. Cystine bridges form between Cys21/Cys27 and Cys109/Cys120. A glycan (N-linked (GlcNAc...) asparagine) is linked at Asn157. The active-site Nucleophile is the Ser171. Asp194 functions as the Charge relay system in the catalytic mechanism. The Ca(2+) site is built by Glu205, Arg208, Asp210, and Asp213. Cys255 and Cys279 are disulfide-bonded. His281 functions as the Charge relay system in the catalytic mechanism. 3 disulfides stabilise this stretch: Cys303–Cys314, Cys317–Cys322, and Cys451–Cys467. Positions 356–467 constitute a PLAT domain; the sequence is WRYGVSITLS…EDVLLTLTPC (112 aa).

It belongs to the AB hydrolase superfamily. Lipase family. As to expression, detected in pancreas (at protein level).

It localises to the secreted. Its function is as follows. May function as inhibitor of dietary triglyceride digestion. Lacks detectable lipase activity towards triglycerides, diglycerides, phosphatidylcholine, galactolipids or cholesterol esters (in vitro). This chain is Inactive pancreatic lipase-related protein 1 (PNLIPRP1), found in Canis lupus familiaris (Dog).